A 3421-amino-acid chain; its full sequence is MWTILALLTATLLFEGAFSVDTVVRKNVDSLSSDEVLALEKALDDLQQDDSNQGYQAIAGYHGVPTMCVDKHEKNVACCLHGMPSFPLWHRLYVVQLERALIRKKATISIPYWDWTSELTHLPELVSHPLFVGTEGGKAHDNSWYRADITFLNKKTSRAVDDRLFEKVQPGHHTRLMEGILDALEQDEFCKFEIQFELAHNAIHYLVGGRHTYSMSHLEYTSYDPLFFLHHSNTDRIFAIWQRLQQLRGKDPNSADCAHNLIHTPMEPFDRDTNPLDLTREHAKPADSFDYGRLGYQYDDLSLNGMSPEELNVYLGERAAKERTFASFILSGFGGSANVVVYVCRPAHDEISDDQCIKAGDFFLLGGPTEMKWGFYRAYHFDVTDSVASIDDDGHGHYYVKSELFSVNGSALSNDILRQPTLVHRPAKGHFDKPPVPVAQANLAVRKNINDLTAEETYSLRKAMERFQNDKSVDGYQATVEFHALPARCPRPDAKDRFACCVHGMATFPHWHRLFVTQVEDALLRRGSTIGLPNWDWTMPMDHLPELATSETYLDPVTGETKNNPFHHAQVAFENGVTSRNPDAKLFMKPTYGDHTYLFDSMIYAFEQEDFCDFEVQYELTHNAIHAWVGGSEKYSMSSLHYTAFDPIFYLHHSNVDRLWAIWQALQIRRGKSYKAHCASSQEREPLKPFAFSSPLNNNEKTYHNSVPTNVYDYVGVLHYRYDDLQFGGMTMSELEEYIHKQTQHDRTFAGFFLSYIGTSASVDIFINREGHDKYKVGSFVVLGGSKEMKWGFDRMYKYEITEALKTLNVAVDDGFSITVEITDVDGSPPSADLIPPPAIIFERADAKDFGHSRKIRKAVDSLTVEEQTSLRRAMADLQDDKTSGGFQQIAAFHGEPKWCPSPEAEKKFACCVHGMAVFPHWHRLLTVQGENALRKHGFTGGLPYWDWTRSMSALPHFVADPTYNDAISSQEEDNPWHHGHIDSVGHDTTRDVRDDLYQSPGFGHYTDIAKQVLLAFEQDDFCDFEVQFEIAHNFIHALVGGNEPYSMSSLRYTTYDPIFFLHRSNTDRLWAIWQALQKYRGKPYNTANCAIASMRKPLQPFGLDSVINPDDETREHSVPFRVFDYKNNFDYEYESLAFNGLSIAQLDRELQRRKSHDRVFAGFLLHEIGQSALVKFYVCKHNVSDCDHYAGEFYILGDEAEMPWRYDRVYKYEITQQLHDLDLHVGDNFFLKYEAFDLNGGSLGGSIFSQPSVIFEPAAGSHQADEYREAVTSASHIRKNIRDLSEGEIESIRSAFLQIQKEGIYENIAKFHGKPGLCEHDGHPVACCVHGMPTFPHWHRLYVLQVENALLERGSAVAVPYWDWTEKADSLPSLINDATYFNSRSQTFDPNPFFRGHIAFENAVTSRDPQPELWDNKDFYENVMLALEQDNFCDFEIQLELIHNALHSRLGGRAKYSLSSLDYTAFDPVFFLHHANVDRIWAIWQDLQRYRKKPYNEADCAVNEMRKPLQPFNNPELNSDSMTLKHNLPQDSFDYQNRFRYQYDNLQFNHFSIQKLDQTIQARKQHDRVFAGFILHNIGTSAVVDIYICVEQGGEQNCKTKAGSFTILGGETEMPFHFDRLYKFDITSALHKLGVPLDGHGFDIKVDVRAVNGSHLDQHILNEPSLLFVPGERKNIYYDGLSQHNLVRKEVSSLTTLEKHFLRKALKNMQADDSPDGYQAIASFHALPPLCPSPSAAHRHACCLHGMATFPQWHRLYTVQFEDSLKRHGSIVGLPYWDWLKPQSALPDLVTQETYEHLFSHKTFPNPFLKANIEFEGEGVTTERDVDAEHLFAKGNLVYNNWFCNQALYALEQENYCDFEIQFEILHNGIHSWVGGSKTHSIGHLHYASYDPLFYIHHSQTDRIWAIWQALQEHRGLSGKEAHCALEQMKDPLKPFSFGSPYNLNKRTQEFSKPEDTFDYHRFGYEYDSLEFVGMSVSSLHNYIKQQQEADRVFAGFLLKGFGQSASVSFDICRPDQSCQEAGYFSVLGGSSEMPWQFDRLYKYDITKTLKDMKLRYDDTFTIKVHIKDIAGAELDSDLIPTPSVLLEEGKHGINVRHVGRNRIRMELSELTERDLASLKSAMRSLQADDGVNGYQAIASFHGLPASCHDDEGHEIACCIHGMPVFPHWHRLYTLQMDMALLSHGSAVAIPYWDWTKPISKLPDLFTSPEYYDPWRDAVVNNPFAKGYIKSEDAYTVRDPQDILYHLQDETGTSVLLDQTLLALEQTDFCDFEVQFEVVHNAIHYLVGGRQVYALSSQHYASYDPAFFIHHSFVDKIWAVWQALQKKRKRPYHKADCALNMMTKPMRPFAHDFNHNGFTKMHAVPNTLFDFQDLFYTYDNLEIAGMNVNQLEAEINRRKSQTRVFAGFLLHGIGRSADVRFWICKTADDCHASGMIFILGGSKEMHWAYDRNFKYDITQALKAQSIHPEDVFDTDAPFFIKVEVHGVNKTALPSSAIPAPTIIYSAGEGHTDDHGSDHIAGSGVRKDVTSLTASEIENLRHALQSVMDDDGPNGFQAIAAYHGSPPMCHMXDGRDVACCTHGMASFPHWHRLFVKQMEDALAAHGAHIGIPYWDWTSAFSHLPALVTDHEHNPFHHGHIAHRNVDTSRSPRDMLFNDPEHGSESFFYRQVLLALEQTDFCQFEVQFEITHNAIHSWTGGHTPYGMSSLEYTAYDPLFYLHHSNTDRIWAIWQALQKYRGFQYNAAHCDIQVLKQPLKPFSESRNPNPVTRANSRAVDSFDYERLNYQYDTLTFHGHSISELDAMLQERKKEERTFAAFLLHGFGASADVSFDVCTPDGHCAFAGTFAVLGGELEMPWSFERLFRYDITKVLKQMNLHYDSEFHFELKIVGTDGTELPSDRIKSPTIEHHGGDHHGGDTSGHDHSERHDGFFRKEVGSLSLDEANDLKNALYKLQNDQGPNGYESIAGYHGYPFLCPEHGEDQYACCVHGMPVFPHWHRLHTIQFERALKEHGSHLGIPYWDWTKSMIALPAFFADSSNSNPFYKYHIMKAGHDTARSPSDLLFNQPQLHGYDYLYYLALSTLEEDNYCDFEVHYEILHNAVHLWLGGTETYSMSSLAFSAYDPVFMILHSGLDRLWIIWQELQKLRKKPYNAAKCAGHMMDEPLHPFNYESANHDSFTRANAKPSTVFDSHKFNYHYDNPDVRGNSIQEISAIIHDLRNQPRVFAGFVLSGIYTSANVKIYLVREGHDDENVGSFVVLGGPKEMPWAYERIFKYDITEVANRLNMHHDDTFNFRLEVQSYTGEMVTHHLPEPLIIYRPAKQEYDVLVIPLGSGHKLPPKVIVKRGTRIMFHPVDDTVNRPVVDLGSHTALYNCVVPPFTYNGYELDHAYSLRDGHYYIAGPTKDLCTSGNVRIHIHIEDE.

Residues 1-19 form the signal peptide; sequence MWTILALLTATLLFEGAFS. The interval 20–442 is functional unit a (wall); the sequence is VDTVVRKNVD…KPPVPVAQAN (423 aa). His-62 contributes to the Cu cation binding site. Residues Cys-68 and Cys-78 are joined by a disulfide bond. The 2'-(S-cysteinyl)-histidine (Cys-His) cross-link spans 79–81; the sequence is CLH. 5 residues coordinate Cu cation: His-81, His-90, His-200, His-204, and His-231. 2 cysteine pairs are disulfide-bonded: Cys-190-Cys-257 and Cys-344-Cys-356. Asn-408 is a glycosylation site (N-linked (GlcNAc...) asparagine). The tract at residues 443–853 is functional unit b (wall); sequence LAVRKNINDL…RADAKDFGHS (411 aa). His-483 is a binding site for Cu cation. Cys-489 and Cys-500 form a disulfide bridge. Positions 501–503 form a cross-link, 2'-(S-cysteinyl)-histidine (Cys-His); the sequence is CVH. 6 residues coordinate Cu cation: His-503, His-512, His-622, His-626, His-653, and His-894. A disulfide bond links Cys-612 and Cys-678. One copy of the WD 1 repeat lies at 632-673; that stretch reads SEKYSMSSLHYTAFDPIFYLHHSNVDRLWAIWQALQIRRGKS. Residues 854–1275 form a functional unit c (wall) region; that stretch reads RKIRKAVDSL…DEYREAVTSA (422 aa). Cys-900 and Cys-911 form a disulfide bridge. The 2'-(S-cysteinyl)-histidine (Cys-His) cross-link spans 912–914; sequence CVH. Residues His-914, His-923, His-1033, His-1037, and His-1063 each contribute to the Cu cation site. 2 cysteine pairs are disulfide-bonded: Cys-1023-Cys-1090 and Cys-1180-Cys-1187. A WD 2 repeat occupies 1043–1084; the sequence is NEPYSMSSLRYTTYDPIFFLHRSNTDRLWAIWQALQKYRGKP. The N-linked (GlcNAc...) asparagine glycan is linked to Asn-1183. A functional unit d (wall) region spans residues 1276-1685; the sequence is SHIRKNIRDL…NIYYDGLSQH (410 aa). His-1313 is a binding site for Cu cation. The cysteines at positions 1319 and 1328 are disulfide-linked. The 2'-(S-cysteinyl)-histidine (Cys-His) cross-link spans 1329-1331; the sequence is CVH. Residues His-1331 and His-1340 each contribute to the Cu cation site. A WD 3 repeat occupies 1387–1425; it reads QTFDPNPFFRGHIAFENAVTSRDPQPELWDNKDFYENVM. Cystine bridges form between Cys-1434-Cys-1501 and Cys-1590-Cys-1599. Cu cation-binding residues include His-1444, His-1448, and His-1475. Residues 1454-1495 form a WD 4 repeat; it reads RAKYSLSSLDYTAFDPVFFLHHANVDRIWAIWQDLQRYRKKP. N-linked (GlcNAc...) asparagine glycosylation occurs at Asn-1653. The tract at residues 1686–2102 is functional unit e (wall); it reads NLVRKEVSSL…HGINVRHVGR (417 aa). Residue His-1726 participates in Cu cation binding. A disulfide bond links Cys-1732 and Cys-1743. A cross-link (2'-(S-cysteinyl)-histidine (Cys-His)) is located at residues 1744 to 1746; it reads CLH. The Cu cation site is built by His-1746, His-1755, His-1868, His-1872, and His-1899. Cystine bridges form between Cys-1858-Cys-1925 and Cys-2014-Cys-2020. The stretch at 1878-1919 is one WD 5 repeat; the sequence is SKTHSIGHLHYASYDPLFYIHHSQTDRIWAIWQALQEHRGLS. Positions 2103–2522 are functional unit f (wall); that stretch reads NRIRMELSEL…DDHGSDHIAG (420 aa). His-2143 is a binding site for Cu cation. A disulfide bridge links Cys-2149 with Cys-2159. The 2'-(S-cysteinyl)-histidine (Cys-His) cross-link spans 2160–2162; the sequence is CIH. Residues His-2162, His-2171, His-2281, His-2285, and His-2312 each contribute to the Cu cation site. A WD 6 repeat occupies 2168–2204; sequence PHWHRLYTLQMDMALLSHGSAVAIPYWDWTKPISKLP. 2 cysteine pairs are disulfide-bonded: Cys-2271–Cys-2338 and Cys-2425–Cys-2431. Residues 2523–2929 are functional unit g (internal arc); the sequence is SGVRKDVTSL…SGHDHSERHD (407 aa). His-2563 contacts Cu cation. Cys-2569 and Cys-2579 are disulfide-bonded. Positions 2580–2582 form a cross-link, 2'-(S-cysteinyl)-histidine (Cys-His); sequence CTH. 5 residues coordinate Cu cation: His-2582, His-2591, His-2691, His-2695, and His-2722. 2 disulfides stabilise this stretch: Cys-2681–Cys-2748 and Cys-2835–Cys-2841. The WD 7 repeat unit spans residues 2700–2742; sequence GHTPYGMSSLEYTAYDPLFYLHHSNTDRIWAIWQALQKYRGFQ. Positions 2898-2927 are disordered; that stretch reads PSDRIKSPTIEHHGGDHHGGDTSGHDHSER. Residues 2930–3421 are functional unit h (internal slab); sequence GFFRKEVGSL…VRIHIHIEDE (492 aa). His-2970 contributes to the Cu cation binding site. The cysteines at positions 2976 and 2986 are disulfide-linked. The segment at residues 2987–2989 is a cross-link (2'-(S-cysteinyl)-histidine (Cys-His)); it reads CVH. Cu cation is bound by residues His-2989, His-2998, His-3099, His-3103, and His-3130. Intrachain disulfides connect Cys-3089–Cys-3156 and Cys-3374–Cys-3407. One copy of the WD 8 repeat lies at 3109-3150; sequence TETYSMSSLAFSAYDPVFMILHSGLDRLWIIWQELQKLRKKP.

The protein belongs to the tyrosinase family. Hemocyanin subfamily. As to quaternary structure, homo-didecamer and homo-multidecamer. Post-translationally, probably N-glycosylated. Asn-2489 is buried deeply in the protein which make it inaccessible for sugar attachment. As to expression, hemolymph.

The protein localises to the secreted. It localises to the extracellular space. Functionally, hemocyanins are copper-containing oxygen carriers occurring freely dissolved in the hemolymph of many mollusks and arthropods. In Megathura crenulata (Giant keyhole limpet), this protein is Hemocyanin 2.